The following is a 347-amino-acid chain: MSTAPLSGFFLTSLSPSQSSLQKLSLRTSSTVACLPPASSSSSSSSSSSSRSVPTLIRNEPVFAAPAPIIAPYWSEEMGTEAYDEAIEALKKLLIEKEELKTVAAAKVEQITAALQTGTSSDKKAFDPVETIKQGFIKFKKEKYETNPALYGELAKGQSPKYMVFACSDSRVCPSHVLDFQPGDAFVVRNIANMVPPFDKVKYGGVGAAIEYAVLHLKVENIVVIGHSACGGIKGLMSFPLDGNNSTDFIEDWVKICLPAKSKVISELGDSAFEDQCGRCEREAVNVSLANLLTYPFVREGLVKGTLALKGGYYDFVKGAFELWGLEFGLSETSSVKDVATILHWKL.

The N-terminal 113 residues, Met1–Ala113, are a transit peptide targeting the chloroplast. Position 114 is an N-acetylalanine (Ala114). Position 175 is a phosphoserine (Ser175). The residue at position 203 (Tyr203) is a Phosphotyrosine. A Phosphoserine modification is found at Ser266. Residue Cys280 is modified to S-nitrosocysteine.

The protein belongs to the beta-class carbonic anhydrase family. As to quaternary structure, homohexamer. Post-translationally, S-nitrosylation at Cys-280 is up-regulated during nitrosative burst and suppresses both binding of salicylic acid and carbonic anhydrase activity. S-nitrosylated in response to an avirulent but not to a virulent bacterial strain. Strongly expressed in aerial tissues including leaves, stems, flowers and siliques. Accumulates in both guard cells and mesophyll cells.

Its subcellular location is the plastid. The protein resides in the chloroplast stroma. It localises to the cell membrane. It carries out the reaction hydrogencarbonate + H(+) = CO2 + H2O. Its function is as follows. Reversible hydration of carbon dioxide. Required for photosynthesis in cotyledons. Binds salicylic acid. Together with BCA4, involved in the CO(2) signaling pathway which controls gas-exchange between plants and the atmosphere by modulating stomatal development and movements. Promotes water use efficiency. The sequence is that of Beta carbonic anhydrase 1, chloroplastic from Arabidopsis thaliana (Mouse-ear cress).